The chain runs to 492 residues: N-succinylglutamate 5-semialdehyde dehydrogenase (492 aa).

An NAD(+)-binding site is contributed by 220-225; the sequence is GSANTG. Active-site residues include Glu243 and Cys277.

It belongs to the aldehyde dehydrogenase family. AstD subfamily.

The catalysed reaction is N-succinyl-L-glutamate 5-semialdehyde + NAD(+) + H2O = N-succinyl-L-glutamate + NADH + 2 H(+). It participates in amino-acid degradation; L-arginine degradation via AST pathway; L-glutamate and succinate from L-arginine: step 4/5. Its function is as follows. Catalyzes the NAD-dependent reduction of succinylglutamate semialdehyde into succinylglutamate. The polypeptide is N-succinylglutamate 5-semialdehyde dehydrogenase (Escherichia fergusonii (strain ATCC 35469 / DSM 13698 / CCUG 18766 / IAM 14443 / JCM 21226 / LMG 7866 / NBRC 102419 / NCTC 12128 / CDC 0568-73)).